The sequence spans 264 residues: Small ribosomal subunit protein uS2 (264 aa).

The protein belongs to the universal ribosomal protein uS2 family.

In Helicobacter pylori (strain P12), this protein is Small ribosomal subunit protein uS2.